We begin with the raw amino-acid sequence, 341 residues long: Putative UPF0607 protein ENSP00000383783 (341 aa).

Residues glutamate 75–arginine 101 are compositionally biased toward basic and acidic residues. Disordered regions lie at residues glutamate 75–leucine 115 and glycine 216–alanine 278. A compositionally biased stretch (low complexity) spans serine 234–histidine 245.

Belongs to the UPF0607 family.

The chain is Putative UPF0607 protein ENSP00000383783 from Homo sapiens (Human).